Consider the following 55-residue polypeptide: uncharacterized protein (55 aa).

Positions 1–15 (MVGQEQLESSPLCQH) are enriched in polar residues. A disordered region spans residues 1–26 (MVGQEQLESSPLCQHSDNETETKREC). Positions 16–26 (SDNETETKREC) are enriched in basic and acidic residues.

This is an uncharacterized protein from Escherichia coli (strain K12).